The chain runs to 139 residues: NADPH-dependent 7-cyano-7-deazaguanine reductase (139 aa).

Cys34 (thioimide intermediate) is an active-site residue. The active-site Proton donor is the Asp41. Substrate contacts are provided by residues Val56–Leu58 and His75–Glu76.

The protein belongs to the GTP cyclohydrolase I family. QueF type 1 subfamily.

The protein resides in the cytoplasm. The catalysed reaction is 7-aminomethyl-7-carbaguanine + 2 NADP(+) = 7-cyano-7-deazaguanine + 2 NADPH + 3 H(+). Its pathway is tRNA modification; tRNA-queuosine biosynthesis. In terms of biological role, catalyzes the NADPH-dependent reduction of 7-cyano-7-deazaguanine (preQ0) to 7-aminomethyl-7-deazaguanine (preQ1). This Thiobacillus denitrificans (strain ATCC 25259 / T1) protein is NADPH-dependent 7-cyano-7-deazaguanine reductase.